We begin with the raw amino-acid sequence, 331 residues long: 6-phosphogluconolactonase (331 aa).

It belongs to the cycloisomerase 2 family.

It carries out the reaction 6-phospho-D-glucono-1,5-lactone + H2O = 6-phospho-D-gluconate + H(+). The protein operates within carbohydrate degradation; pentose phosphate pathway; D-ribulose 5-phosphate from D-glucose 6-phosphate (oxidative stage): step 2/3. Functionally, catalyzes the hydrolysis of 6-phosphogluconolactone to 6-phosphogluconate. The sequence is that of 6-phosphogluconolactonase from Enterobacter sp. (strain 638).